A 90-amino-acid polypeptide reads, in one-letter code: UPF0386 protein Rru_A2144 (90 aa).

It belongs to the UPF0386 family.

This is UPF0386 protein Rru_A2144 from Rhodospirillum rubrum (strain ATCC 11170 / ATH 1.1.1 / DSM 467 / LMG 4362 / NCIMB 8255 / S1).